The chain runs to 122 residues: Large ribosomal subunit protein uL14 (122 aa).

It belongs to the universal ribosomal protein uL14 family. Part of the 50S ribosomal subunit. Forms a cluster with proteins L3 and L19. In the 70S ribosome, L14 and L19 interact and together make contacts with the 16S rRNA in bridges B5 and B8.

Binds to 23S rRNA. Forms part of two intersubunit bridges in the 70S ribosome. The polypeptide is Large ribosomal subunit protein uL14 (Leuconostoc mesenteroides subsp. mesenteroides (strain ATCC 8293 / DSM 20343 / BCRC 11652 / CCM 1803 / JCM 6124 / NCDO 523 / NBRC 100496 / NCIMB 8023 / NCTC 12954 / NRRL B-1118 / 37Y)).